Reading from the N-terminus, the 1533-residue chain is Protein TALPID3 (1533 aa).

The disordered stretch occupies residues 32 to 57 (LSANKRLPVGTGTSLNGTSRGSSDLT). Positions 42 to 57 (TGTSLNGTSRGSSDLT) are enriched in polar residues. Residues 182 to 223 (QSDLEAKVNSVTELLSKLQETDKHLQRVTEQQTSIQRKQEKL) are a coiled coil. The segment covering 309–321 (KEVEDTSFDKQKS) has biased composition (basic and acidic residues). 2 disordered regions span residues 309–339 (KEVE…VSRD) and 377–400 (LTRK…TPEK). Phosphoserine is present on S406. The stretch at 467–501 (SVLKDAEKILRGVQNNKKVLEENLEAIIRAKDGAA) forms a coiled coil. Residues 467–554 (SVLKDAEKIL…YEQKRFDQKN (88 aa)) are required for centrosomal localization. Positions 546–575 (EQKRFDQKNQRTKKGQNMTKDIRTNTQDKT) are disordered. Polar residues predominate over residues 560-575 (GQNMTKDIRTNTQDKT). Phosphothreonine occurs at positions 1042 and 1046. The residue at position 1050 (S1050) is a Phosphoserine. At T1063 the chain carries Phosphothreonine. A Phosphoserine modification is found at S1066. Residues 1129 to 1156 (SSPELPKPWGDGDLPLEEENPNSPQEEL) are disordered.

Belongs to the TALPID3 family. In terms of assembly, interacts with CCP110, CEP290, CEP97, KIF24. In terms of tissue distribution, ubiquitously expressed. Expressed in photoreceptor cells (at protein level).

The protein localises to the cytoplasm. The protein resides in the cytoskeleton. It localises to the microtubule organizing center. It is found in the centrosome. Its subcellular location is the photoreceptor inner segment. The protein localises to the centriole. The protein resides in the cilium basal body. Required for ciliogenesis and sonic hedgehog/SHH signaling. Required for the centrosomal recruitment of RAB8A and for the targeting of centriole satellite proteins to centrosomes such as of PCM1. May play a role in early ciliogenesis in the disappearance of centriolar satellites that preceeds ciliary vesicle formation. Involved in regulation of cell intracellular organization. Involved in regulation of cell polarity. Required for asymmetrical localization of CEP120 to daughter centrioles. This is Protein TALPID3 (KIAA0586) from Homo sapiens (Human).